A 331-amino-acid polypeptide reads, in one-letter code: 2-keto-3-deoxygluconate permease (331 aa).

The next 10 helical transmembrane spans lie at 10–30 (IPGG…TLAP), 42–62 (GMIS…GASI), 77–97 (LVLT…MFIP), 100–120 (GIQT…AMDM), 141–161 (AFVL…LGSA), 163–183 (LASF…IGFA), 200–220 (PVLI…NVIM), 224–244 (LLGI…LIIA), 254–274 (TAGV…MIIA), and 289–309 (ALVA…TALY).

This sequence belongs to the KdgT transporter family.

It is found in the cell inner membrane. The catalysed reaction is 2-dehydro-3-deoxy-D-gluconate(in) + H(+)(in) = 2-dehydro-3-deoxy-D-gluconate(out) + H(+)(out). In terms of biological role, catalyzes the proton-dependent uptake of 2-keto-3-deoxygluconate (KDG) into the cell. The sequence is that of 2-keto-3-deoxygluconate permease from Enterobacter sp. (strain 638).